The sequence spans 510 residues: ATP synthase subunit alpha (510 aa).

169–176 (GDRQTGKT) contacts ATP.

The protein belongs to the ATPase alpha/beta chains family. In terms of assembly, F-type ATPases have 2 components, CF(1) - the catalytic core - and CF(0) - the membrane proton channel. CF(1) has five subunits: alpha(3), beta(3), gamma(1), delta(1), epsilon(1). CF(0) has three main subunits: a(1), b(2) and c(9-12). The alpha and beta chains form an alternating ring which encloses part of the gamma chain. CF(1) is attached to CF(0) by a central stalk formed by the gamma and epsilon chains, while a peripheral stalk is formed by the delta and b chains.

It localises to the cell membrane. It carries out the reaction ATP + H2O + 4 H(+)(in) = ADP + phosphate + 5 H(+)(out). Its function is as follows. Produces ATP from ADP in the presence of a proton gradient across the membrane. The alpha chain is a regulatory subunit. The protein is ATP synthase subunit alpha of Thermomicrobium roseum (strain ATCC 27502 / DSM 5159 / P-2).